The primary structure comprises 440 residues: Polycomb group protein VERNALIZATION 2 (440 aa).

A C2H2-type zinc finger spans residues 86–111 (EDCSCPFCSMLCGSFKGLQFHLNSSH). Residues 156–163 (KPRKRRQR) carry the Nuclear localization signal motif. The tract at residues 267–345 (RQFYHSHRVQ…GHISWACEVF (79 aa)) is VEFS-box. Residues 398-440 (NNNNNSVDHPSDSNTNNNNIVDHPNDIKNKNNVDNKDNNSRDK) are disordered. Basic and acidic residues predominate over residues 420 to 440 (HPNDIKNKNNVDNKDNNSRDK).

This sequence belongs to the VEFS (VRN2-EMF2-FIS2-SU(Z)12) family. Probable component of a PcG complex. In plants, PcG complexes are probably composed of a member of the EZ family (CLF or MEA), FIE, and a member of the VEFS family (FIS2, VRN2 or EMF2). Component of the plant homeodomain / polycomb repressive complex 2 (PHD-PRC2) large complex during prolonged cold, composed of core PRC2 components (VRN2, EZA1, FIE and MSI1), and three related PHD finger proteins (VIL1, VIL2 and VIN3) that mediates histone H3 trimethylation on 'Lys-27' (H3K27me3). Binds to ALP1. Weakly expressed. Expressed both during, and in the absence of vernalization.

The protein resides in the nucleus. Polycomb group (PcG) protein. Plays a central role in vernalization by maintaining repressed the homeotic gene FLC, a floral repressor, after a cold treatment. PcG proteins act by forming multiprotein complexes, which are required to maintain the transcriptionally repressive state of homeotic genes throughout development. PcG proteins are not required to initiate repression, but to maintain it during later stages of development. They probably act via the methylation of histones, rendering chromatin heritably changed in its expressibility. Associates constitutively along the whole FLC locus. The polypeptide is Polycomb group protein VERNALIZATION 2 (VRN2) (Arabidopsis thaliana (Mouse-ear cress)).